Reading from the N-terminus, the 440-residue chain is Histidinol dehydrogenase (440 aa).

NAD(+) contacts are provided by Tyr-133, Gln-194, and Asn-217. The substrate site is built by Ser-240, Gln-262, and His-265. Residues Gln-262 and His-265 each coordinate Zn(2+). Catalysis depends on proton acceptor residues Glu-330 and His-331. Positions 331, 364, 418, and 423 each coordinate substrate. Asp-364 lines the Zn(2+) pocket. His-423 provides a ligand contact to Zn(2+).

Belongs to the histidinol dehydrogenase family. The cofactor is Zn(2+).

It carries out the reaction L-histidinol + 2 NAD(+) + H2O = L-histidine + 2 NADH + 3 H(+). It functions in the pathway amino-acid biosynthesis; L-histidine biosynthesis; L-histidine from 5-phospho-alpha-D-ribose 1-diphosphate: step 9/9. Catalyzes the sequential NAD-dependent oxidations of L-histidinol to L-histidinaldehyde and then to L-histidine. This chain is Histidinol dehydrogenase, found in Nitrosospira multiformis (strain ATCC 25196 / NCIMB 11849 / C 71).